We begin with the raw amino-acid sequence, 615 residues long: Envelope glycoprotein (615 aa).

Residues 1 to 84 form the signal peptide; sequence MPKRRAGFRK…VQNGAAAAFW (84 aa). The Extracellular segment spans residues 85–378; it reads AYIPDPPMIQ…INTALSRPKR (294 aa). 6 N-linked (GlcNAc...) asparagine; by host glycosylation sites follow: Asn-108, Asn-127, Asn-178, Asn-219, Asn-275, and Asn-319. Residues 379–402 form a helical membrane-spanning segment; the sequence is GLSLIILGIVSLITLIATAVTACV. Residues 403–615 lie on the Cytoplasmic side of the membrane; that stretch reads SLAQSIQAAH…KERGAAGDDP (213 aa). Coiled coils occupy residues 411–461 and 495–531; these read AHTV…FRMK and IWFNTNLSLDLLQLHNEILDIENSPKATLNIADTVDN. A required for cell transformation region spans residues 590-593; sequence YRTM.

In terms of assembly, interacts with sheep HYAL2 receptor.

The protein localises to the virion membrane. Functionally, the envelope proteins induce cell transformation leading to ovine pulmonary adenocarcinoma (OPA), a contagious lung cancer of sheep and goat. They bind to the HYAL2 receptor for cell entry. Env proteins probably do not act as oncogenes by themselves, but may rather liberate an oncogenic factor that would normally be negatively regulated. One mechanism of transformation seems to involve activation of the phosphoinositide-3-OH kinase (PI3K)/Akt pathway but does not involve the virus receptor HYAL2, and the other seems to involve Env binding to HYAL2, HYAL2 degradation, and activation of the MST1R receptor tyrosine kinase, which is normally suppressed by HYAL2. This is Envelope glycoprotein (env) from Ovis aries (Sheep).